A 250-amino-acid chain; its full sequence is Pyrroloquinoline-quinone synthase (250 aa).

The protein belongs to the PqqC family.

The enzyme catalyses 6-(2-amino-2-carboxyethyl)-7,8-dioxo-1,2,3,4,7,8-hexahydroquinoline-2,4-dicarboxylate + 3 O2 = pyrroloquinoline quinone + 2 H2O2 + 2 H2O + H(+). Its pathway is cofactor biosynthesis; pyrroloquinoline quinone biosynthesis. Its function is as follows. Ring cyclization and eight-electron oxidation of 3a-(2-amino-2-carboxyethyl)-4,5-dioxo-4,5,6,7,8,9-hexahydroquinoline-7,9-dicarboxylic-acid to PQQ. This Ectopseudomonas mendocina (strain ymp) (Pseudomonas mendocina) protein is Pyrroloquinoline-quinone synthase.